The following is a 423-amino-acid chain: Probable serine/threonine-protein kinase PBL5 (423 aa).

Residues 1-66 are disordered; that stretch reads MGCFGCSKKS…DVNNEGGVGK (66 aa). The N-myristoyl glycine moiety is linked to residue glycine 2. Cysteine 3 is lipidated: S-palmitoyl cysteine. A compositionally biased stretch (basic and acidic residues) spans 12–22; sequence KRSETNKDTVI. Residues 43-52 are compositionally biased toward polar residues; sequence TQPSSDSTKV. The residue at position 92 (threonine 92) is a Phosphothreonine. The Protein kinase domain occupies 103 to 380; it reads FRSDCFLGEG…SDVVLALNFL (278 aa). ATP contacts are provided by residues 109–117 and lysine 132; that span reads LGEGGFGKV. Tyrosine 177 is modified (phosphotyrosine). Residue aspartate 230 is the Proton acceptor of the active site. A phosphoserine mark is found at serine 234 and serine 264. Residues threonine 265 and threonine 270 each carry the phosphothreonine modification. The residue at position 278 (tyrosine 278) is a Phosphotyrosine. Positions 383-398 are enriched in low complexity; it reads SKYDPNSPSSSSGKNP. Residues 383–423 are disordered; the sequence is SKYDPNSPSSSSGKNPSFHRDRDDEEKRPHLVKETECEGSS. The span at 400 to 423 shows a compositional bias: basic and acidic residues; that stretch reads FHRDRDDEEKRPHLVKETECEGSS.

Belongs to the protein kinase superfamily. Ser/Thr protein kinase family. Post-translationally, palmitoylation at Cys-3 and Cys-6 are required for plasma membrane location.

It localises to the cell membrane. The catalysed reaction is L-seryl-[protein] + ATP = O-phospho-L-seryl-[protein] + ADP + H(+). It carries out the reaction L-threonyl-[protein] + ATP = O-phospho-L-threonyl-[protein] + ADP + H(+). May be involved in plant defense signaling. This Arabidopsis thaliana (Mouse-ear cress) protein is Probable serine/threonine-protein kinase PBL5.